Reading from the N-terminus, the 246-residue chain is Acetoacetate decarboxylase (246 aa).

The active-site Schiff-base intermediate with acetoacetate is lysine 116.

Belongs to the ADC family.

It catalyses the reaction acetoacetate + H(+) = acetone + CO2. Functionally, catalyzes the conversion of acetoacetate to acetone and carbon dioxide. The chain is Acetoacetate decarboxylase from Burkholderia cenocepacia (strain HI2424).